Consider the following 339-residue polypeptide: AB hydrolase superfamily protein B1A11.02 (339 aa).

It belongs to the AB hydrolase superfamily.

This is AB hydrolase superfamily protein B1A11.02 from Schizosaccharomyces pombe (strain 972 / ATCC 24843) (Fission yeast).